Here is a 611-residue protein sequence, read N- to C-terminus: ANK repeat-containing protein nipk-1 (611 aa).

Residues 91 to 149 (NSKSKKKTENQETKEKDEEAEEKKDGPPKDDKELKMKKEKEQEDENAELDEQKKDGDLL) adopt a coiled-coil conformation. 3 disordered regions span residues 92–167 (SKSK…SHPY), 212–255 (ISAS…DTSR), and 280–333 (TKEE…LSPR). The segment covering 97-131 (KTENQETKEKDEEAEEKKDGPPKDDKELKMKKEKE) has biased composition (basic and acidic residues). Composition is skewed to polar residues over residues 212–223 (ISASTTPDTVLS), 239–255 (ESLQ…DTSR), and 315–333 (GTCS…LSPR). ANK repeat units lie at residues 375 to 405 (DGDT…TMNE), 417 to 446 (FGET…SPNS), 452 to 482 (VGDS…RVNE), 486 to 527 (DGQT…DPTI), and 532 to 561 (TGKT…EDTF).

This sequence belongs to the iASPP family. As to expression, expressed in the nervous system.

Functionally, acts downstream of the receptor complex composed of ilcr-1 and ilcr-2, which is a signaling complex that modulates neuronal activity and animal behavior in response to sensory neuron input. Mediates signaling of the complex. This is ANK repeat-containing protein nipk-1 from Caenorhabditis elegans.